We begin with the raw amino-acid sequence, 182 residues long: UPF0423 protein BRA0381/BS1330_II0378 (182 aa).

The first 24 residues, 1–24, serve as a signal peptide directing secretion; it reads MKNLFRTAALMVPLSLALAYGAQA.

Belongs to the UPF0423 family.

The chain is UPF0423 protein BRA0381/BS1330_II0378 from Brucella suis biovar 1 (strain 1330).